The chain runs to 484 residues: Acetyl-coenzyme A carboxylase carboxyl transferase subunit beta, chloroplastic (484 aa).

One can recognise a CoA carboxyltransferase N-terminal domain in the interval 223 to 484 (LWIQCDNCYG…LHAFFPLNKN (262 aa)). The Zn(2+) site is built by cysteine 227, cysteine 230, cysteine 243, and cysteine 246. A C4-type zinc finger spans residues 227–246 (CDNCYGLMYKKVKINVCEQC).

Belongs to the AccD/PCCB family. Acetyl-CoA carboxylase is a heterohexamer composed of biotin carboxyl carrier protein, biotin carboxylase and 2 subunits each of ACCase subunit alpha and ACCase plastid-coded subunit beta (accD). It depends on Zn(2+) as a cofactor.

It localises to the plastid. The protein localises to the chloroplast stroma. It catalyses the reaction N(6)-carboxybiotinyl-L-lysyl-[protein] + acetyl-CoA = N(6)-biotinyl-L-lysyl-[protein] + malonyl-CoA. It participates in lipid metabolism; malonyl-CoA biosynthesis; malonyl-CoA from acetyl-CoA: step 1/1. Component of the acetyl coenzyme A carboxylase (ACC) complex. Biotin carboxylase (BC) catalyzes the carboxylation of biotin on its carrier protein (BCCP) and then the CO(2) group is transferred by the transcarboxylase to acetyl-CoA to form malonyl-CoA. This is Acetyl-coenzyme A carboxylase carboxyl transferase subunit beta, chloroplastic from Capsella bursa-pastoris (Shepherd's purse).